Reading from the N-terminus, the 146-residue chain is Catabolic 3-dehydroquinase (146 aa).

Tyrosine 24 (proton acceptor) is an active-site residue. Substrate is bound by residues asparagine 78, histidine 84, and aspartate 91. Histidine 104 functions as the Proton donor in the catalytic mechanism. Substrate is bound by residues 105-106 (IT) and arginine 115.

It belongs to the type-II 3-dehydroquinase family. As to quaternary structure, homododecamer. Adopts a ring-like structure, composed of an arrangement of two hexameric rings stacked on top of one another.

The catalysed reaction is 3-dehydroquinate = 3-dehydroshikimate + H2O. The protein operates within aromatic compound metabolism; 3,4-dihydroxybenzoate biosynthesis; 3,4-dihydroxybenzoate from 3-dehydroquinate: step 1/2. Is involved in the catabolism of quinate. Allows the utilization of quinate as carbon source via the beta-ketoadipate pathway. The protein is Catabolic 3-dehydroquinase of Candida tropicalis (strain ATCC MYA-3404 / T1) (Yeast).